Here is a 316-residue protein sequence, read N- to C-terminus: Ribosomal RNA large subunit methyltransferase F (316 aa).

The interval 200–222 is disordered; that stretch reads EEANKSTSRKVSNLNPKEKKNTN. The span at 204–214 shows a compositional bias: polar residues; that stretch reads KSTSRKVSNLN.

It belongs to the methyltransferase superfamily. METTL16/RlmF family.

Its subcellular location is the cytoplasm. The enzyme catalyses adenosine(1618) in 23S rRNA + S-adenosyl-L-methionine = N(6)-methyladenosine(1618) in 23S rRNA + S-adenosyl-L-homocysteine + H(+). Functionally, specifically methylates the adenine in position 1618 of 23S rRNA. The chain is Ribosomal RNA large subunit methyltransferase F from Flavobacterium johnsoniae (strain ATCC 17061 / DSM 2064 / JCM 8514 / BCRC 14874 / CCUG 350202 / NBRC 14942 / NCIMB 11054 / UW101) (Cytophaga johnsonae).